The chain runs to 396 residues: 1-deoxy-D-xylulose 5-phosphate reductoisomerase (396 aa).

NADPH contacts are provided by T10, G11, S12, I13, and N123. Residue K124 coordinates 1-deoxy-D-xylulose 5-phosphate. E125 lines the NADPH pocket. D149 contacts Mn(2+). The 1-deoxy-D-xylulose 5-phosphate site is built by S150, E151, S185, and H208. E151 contacts Mn(2+). G214 serves as a coordination point for NADPH. The 1-deoxy-D-xylulose 5-phosphate site is built by S221, N226, K227, and E230. Residue E230 coordinates Mn(2+).

This sequence belongs to the DXR family. It depends on Mg(2+) as a cofactor. Mn(2+) is required as a cofactor.

The enzyme catalyses 2-C-methyl-D-erythritol 4-phosphate + NADP(+) = 1-deoxy-D-xylulose 5-phosphate + NADPH + H(+). It functions in the pathway isoprenoid biosynthesis; isopentenyl diphosphate biosynthesis via DXP pathway; isopentenyl diphosphate from 1-deoxy-D-xylulose 5-phosphate: step 1/6. Catalyzes the NADPH-dependent rearrangement and reduction of 1-deoxy-D-xylulose-5-phosphate (DXP) to 2-C-methyl-D-erythritol 4-phosphate (MEP). The protein is 1-deoxy-D-xylulose 5-phosphate reductoisomerase of Shewanella frigidimarina (strain NCIMB 400).